Consider the following 615-residue polypeptide: MESSRLFTLGLGNSDDGLKSTFGDKTVTCFYCNKKKEKIRDGTSTWTCSICEATNHIDEKGDILDYRPPTPTQDKGVGPFYAIRDFPSSSSFQSPFCEKCQMNQLIVNRMLADYLPDSSHPDYQAYEKALPEYKKSIEEKFPIVCSECYDSVQDQLDANDYEAKNQVLGYWLQKSKEQLNAKVPHHYPKASFVLWLLRGFGFSFFYLQSIVWHLYHSMIISLLPDGIRNLFLKAISYFLLDGSSSKIFYFNWLGFFVVFWNPYWYKMMDNPSWELFGRDQYIQCQALYLIIRLTCLYLLSCYESEILNLSSDTNLESDFLLRQIHAAFFFVTICFTWISISCLKPSPPPEVHLTGEILKPRKKRQESTSSVHRIGKESSDRKDGISGQNKLQQFATISILNNTNATSHLGNQSVRERAPEESPMTFLQKKMAALPTSSPVRPMLKPTLQLQNSPLSKLVPQEVGNKVNDSIHTTSNQPSKFSLNPSISLKGDNVIEKNLPFSVSTLKSTAKKDTGKAGDGQNREIQNEPVSLESHFSKSLALQNDPTEVIQVKNVLHRNRRNAKLLIAFTILFLVGLICGWRLNRFTMFIYYLCILVLATYYVMKHNFYPLRKVA.

3 helical membrane-spanning segments follow: residues 192–212 (FVLW…SIVW), 247–267 (IFYF…WYKM), and 323–343 (QIHA…ISCL). Residues 357–387 (ILKPRKKRQESTSSVHRIGKESSDRKDGISG) form a disordered region. Residues 374-384 (IGKESSDRKDG) are compositionally biased toward basic and acidic residues. 2 consecutive transmembrane segments (helical) span residues 563-583 (AKLL…GWRL) and 586-606 (FTMF…VMKH).

The protein localises to the nucleus inner membrane. Functionally, inner nuclear membrane protein that specifically binds to heterochromatic regions and promotes the tethering of centromeric DNA to the SUN-KASH complex. Couples centromeres to the nuclear envelope, thus contributing to their association with the microtubule organizing center attachment site and to the positioning of the nucleus at the cell center by microtubules. The protein is Integral inner nuclear membrane protein ima1 (IMA1) of Schizosaccharomyces pombe (strain 972 / ATCC 24843) (Fission yeast).